We begin with the raw amino-acid sequence, 280 residues long: Nucleotide-binding protein CV_3336 (280 aa).

8–15 provides a ligand contact to ATP; that stretch reads GLSGSGKS. 57–60 provides a ligand contact to GTP; the sequence is DTRS.

This sequence belongs to the RapZ-like family.

Displays ATPase and GTPase activities. The chain is Nucleotide-binding protein CV_3336 from Chromobacterium violaceum (strain ATCC 12472 / DSM 30191 / JCM 1249 / CCUG 213 / NBRC 12614 / NCIMB 9131 / NCTC 9757 / MK).